A 155-amino-acid chain; its full sequence is Ribosome maturation factor RimP (155 aa).

Belongs to the RimP family.

The protein localises to the cytoplasm. Its function is as follows. Required for maturation of 30S ribosomal subunits. This Lachnoclostridium phytofermentans (strain ATCC 700394 / DSM 18823 / ISDg) (Clostridium phytofermentans) protein is Ribosome maturation factor RimP.